The primary structure comprises 166 residues: Urease accessory protein UreE (166 aa).

The segment at 132–156 (FQPEHGAYGGGHHHSRHGDEDFNYP) is disordered.

The protein belongs to the UreE family.

It is found in the cytoplasm. Involved in urease metallocenter assembly. Binds nickel. Probably functions as a nickel donor during metallocenter assembly. The protein is Urease accessory protein UreE of Pseudomonas fluorescens (strain ATCC BAA-477 / NRRL B-23932 / Pf-5).